The chain runs to 384 residues: S-adenosylmethionine synthase (384 aa).

Histidine 15 contributes to the ATP binding site. Residue aspartate 17 coordinates Mg(2+). Glutamate 43 is a K(+) binding site. The L-methionine site is built by glutamate 56 and glutamine 99. The segment at 99–109 (QSPDINQGVDR) is flexible loop. Residues 164 to 166 (DAK), 230 to 231 (RF), aspartate 239, 245 to 246 (RK), alanine 262, and lysine 266 each bind ATP. Aspartate 239 contributes to the L-methionine binding site. Lysine 270 lines the L-methionine pocket.

The protein belongs to the AdoMet synthase family. Homotetramer; dimer of dimers. Requires Mg(2+) as cofactor. It depends on K(+) as a cofactor.

Its subcellular location is the cytoplasm. The catalysed reaction is L-methionine + ATP + H2O = S-adenosyl-L-methionine + phosphate + diphosphate. It functions in the pathway amino-acid biosynthesis; S-adenosyl-L-methionine biosynthesis; S-adenosyl-L-methionine from L-methionine: step 1/1. Catalyzes the formation of S-adenosylmethionine (AdoMet) from methionine and ATP. The overall synthetic reaction is composed of two sequential steps, AdoMet formation and the subsequent tripolyphosphate hydrolysis which occurs prior to release of AdoMet from the enzyme. This chain is S-adenosylmethionine synthase, found in Serratia proteamaculans (strain 568).